The primary structure comprises 218 residues: Elongation factor Ts (218 aa).

The interval 82-85 is involved in Mg(2+) ion dislocation from EF-Tu; the sequence is TDFV.

This sequence belongs to the EF-Ts family.

The protein resides in the cytoplasm. Associates with the EF-Tu.GDP complex and induces the exchange of GDP to GTP. It remains bound to the aminoacyl-tRNA.EF-Tu.GTP complex up to the GTP hydrolysis stage on the ribosome. The sequence is that of Elongation factor Ts from Prochlorococcus marinus (strain MIT 9303).